Here is a 612-residue protein sequence, read N- to C-terminus: Protein tipD (612 aa).

The interval 95–128 is disordered; the sequence is RNEKKTQQQPPSGSSKMDSSSSSSSSNRVSGMGS. Residues 106–128 show a composition bias toward low complexity; it reads SGSSKMDSSSSSSSSNRVSGMGS. WD repeat units lie at residues 322–361, 364–403, 406–444, 447–486, 490–530, 535–576, and 582–611; these read GHNSEIYCMAFNSIGNLLATGGGDKCVKVWDVISGQQKST, GASQSIVSVSFSPNDESILGTSNDNSARLWNTELGRSRHT, GHIGKVYTGKFINSNRVVTGSHDRTIKLWDLQKGYCTRT, CFSSCNDLVILGGSGTHLASGHVDHSVRFWDSNAGEPTQV, IHEG…TIRT, EYRN…TVKV, and NNGSSVCCCSWSPLANIFISADKDKNIIQW.

It belongs to the WD repeat tipD family.

Its function is as follows. Not known; disruption of the gene for tipD results in morphological defects. This is Protein tipD (tipD) from Dictyostelium discoideum (Social amoeba).